A 509-amino-acid chain; its full sequence is Activin receptor type-1 (509 aa).

The first 20 residues, 1–20, serve as a signal peptide directing secretion; it reads MVDGAMILSVLMMMALPSPS. Topologically, residues 21 to 123 are extracellular; that stretch reads MEDEEPKVNP…FPGSQNFHLE (103 aa). N-linked (GlcNAc...) asparagine glycosylation is present at Asn-102. The chain crosses the membrane as a helical span at residues 124 to 146; sequence VGLIILSVVFAVCLFACILGVAL. The Cytoplasmic segment spans residues 147–509; it reads RKFKRRNQER…NSLDKLKTDC (363 aa). The region spanning 178–207 is the GS domain; that stretch reads STLAELLDHSCTSGSGSGLPFLVQRTVARQ. Residues 208 to 502 enclose the Protein kinase domain; sequence ITLLECVGKG…KTLTKIDNSL (295 aa). Residues 214–222 and Lys-235 each bind ATP; that span reads VGKGRYGEV. Asp-336 acts as the Proton acceptor in catalysis. Residue Ser-501 is modified to Phosphoserine.

Belongs to the protein kinase superfamily. TKL Ser/Thr protein kinase family. TGFB receptor subfamily. As to quaternary structure, interacts with FKBP1A. Interacts with FCHO1. Interacts with CLU. Interacts with type II receptors AMHR2 and ACVR2A. Interacts with BMP7. Interacts with GDF2/BMP9. Interacts with BMP6 (when glycosylated); the interaction may induce HAMP expression. Interacts with TSC22D1/TSC-22. It depends on Mg(2+) as a cofactor. Requires Mn(2+) as cofactor. Urogenital ridge, testis, ovary, brain and lungs.

The protein resides in the membrane. It carries out the reaction L-threonyl-[receptor-protein] + ATP = O-phospho-L-threonyl-[receptor-protein] + ADP + H(+). It catalyses the reaction L-seryl-[receptor-protein] + ATP = O-phospho-L-seryl-[receptor-protein] + ADP + H(+). In terms of biological role, bone morphogenetic protein (BMP) type I receptor that is involved in a wide variety of biological processes, including bone, heart, cartilage, nervous, and reproductive system development and regulation. As a type I receptor, forms heterotetrameric receptor complexes with the type II receptors AMHR2, ACVR2A ors ACVR2B. Upon binding of ligands such as BMP7 or GDF2/BMP9 to the heteromeric complexes, type II receptors transphosphorylate ACVR1 intracellular domain. In turn, ACVR1 kinase domain is activated and subsequently phosphorylates SMAD1/5/8 proteins that transduce the signal. In addition to its role in mediating BMP pathway-specific signaling, suppresses TGFbeta/activin pathway signaling by interfering with the binding of activin to its type II receptor. Besides canonical SMAD signaling, can activate non-canonical pathways such as p38 mitogen-activated protein kinases/MAPKs. May promote the expression of HAMP, potentially via its interaction with BMP6. In Rattus norvegicus (Rat), this protein is Activin receptor type-1 (Acvr1).